The following is a 521-amino-acid chain: MSDPVIKRALVSVSDKTGIVDFCRELSLLGVEVFSTGGTLKTLQDAGIAAASISTITGFPEIMDGRVKTLHPKIHGGLLAVRENPDHVNQANENGISFIDLVVVNLYPFEATVAKPDVTFEDAIENIDIGGPSMLRSAAKNNESVTVVTDSADYALVLQEMRNNNGATKRETRLALALKVFELTSRYDRAIASYLAGAQHEADSSMTVKLERELDMRYGENPHQSAGLYRLTDENGTRSFSDYFEKLHGKELSYNNMLDIAAAVSLIEEFRGEEPTVVIIKHTNPCGVAQAPTLAEAYRRAFSTDTQAPFGGIIAFNHPLDMEAATAVNEIFTEILIAPAFEDGVLEMLMKKKDRRLVRQTSALPKGGWEFKSTPFGMLVQERDSKIVTKEDLTVVTKRQPTEEEVADMMFAWKICKHIKSNTILYVKNRQTFGVGAGQMSRVDSSKIARWKASEVNLDLHGSVVASDAFFPFADGLLAAAEAGVTAVIQPGGSIRDNEVIEAADANNLAMVFTGMRHFKH.

The 149-residue stretch at 1–149 (MSDPVIKRAL…KNNESVTVVT (149 aa)) folds into the MGS-like domain.

The protein belongs to the PurH family.

The catalysed reaction is (6R)-10-formyltetrahydrofolate + 5-amino-1-(5-phospho-beta-D-ribosyl)imidazole-4-carboxamide = 5-formamido-1-(5-phospho-D-ribosyl)imidazole-4-carboxamide + (6S)-5,6,7,8-tetrahydrofolate. It carries out the reaction IMP + H2O = 5-formamido-1-(5-phospho-D-ribosyl)imidazole-4-carboxamide. Its pathway is purine metabolism; IMP biosynthesis via de novo pathway; 5-formamido-1-(5-phospho-D-ribosyl)imidazole-4-carboxamide from 5-amino-1-(5-phospho-D-ribosyl)imidazole-4-carboxamide (10-formyl THF route): step 1/1. The protein operates within purine metabolism; IMP biosynthesis via de novo pathway; IMP from 5-formamido-1-(5-phospho-D-ribosyl)imidazole-4-carboxamide: step 1/1. This is Bifunctional purine biosynthesis protein PurH from Chlorobium phaeobacteroides (strain DSM 266 / SMG 266 / 2430).